The chain runs to 347 residues: NADH-quinone oxidoreductase subunit H (347 aa).

9 consecutive transmembrane segments (helical) span residues 13 to 33 (LLIL…VAYI), 50 to 70 (PNVV…KFVF), 82 to 102 (GVFL…WAVI), 115 to 135 (VGIL…IMAG), 161 to 181 (IGFV…TDIV), 198 to 218 (FLDW…ISAL), 248 to 268 (FLLF…LTTI), 286 to 306 (VPGV…FALV), and 321 to 341 (LGWK…AAFL).

It belongs to the complex I subunit 1 family. As to quaternary structure, NDH-1 is composed of 14 different subunits. Subunits NuoA, H, J, K, L, M, N constitute the membrane sector of the complex.

The protein resides in the cell inner membrane. It catalyses the reaction a quinone + NADH + 5 H(+)(in) = a quinol + NAD(+) + 4 H(+)(out). In terms of biological role, NDH-1 shuttles electrons from NADH, via FMN and iron-sulfur (Fe-S) centers, to quinones in the respiratory chain. The immediate electron acceptor for the enzyme in this species is believed to be ubiquinone. Couples the redox reaction to proton translocation (for every two electrons transferred, four hydrogen ions are translocated across the cytoplasmic membrane), and thus conserves the redox energy in a proton gradient. This subunit may bind ubiquinone. The sequence is that of NADH-quinone oxidoreductase subunit H from Chelativorans sp. (strain BNC1).